The following is a 62-amino-acid chain: Disintegrin atropoimin (62 aa).

The region spanning 1 to 62 (EAGEECDCGT…ADCPRNGLYG (62 aa)) is the Disintegrin domain. 5 disulfides stabilise this stretch: Cys-6–Cys-21, Cys-8–Cys-16, Cys-15–Cys-38, Cys-29–Cys-35, and Cys-34–Cys-48. The Cell attachment site signature appears at 41–42 (GD).

It belongs to the venom metalloproteinase (M12B) family. P-II subfamily. P-IIa sub-subfamily. Monomer. In terms of tissue distribution, expressed by the venom gland.

It is found in the secreted. Inhibits ADP- (IC(50)=63 nM) and collagen-induced (IC(50)=53 nM) aggregation of human platelets. In vitro, inhibits adhesion of endothelial cells to vitronectin, type-I collagen and, to a lower degree, fibronectin and laminin. In Metlapilcoatlus mexicanus (Central American jumping pitviper), this protein is Disintegrin atropoimin.